A 281-amino-acid chain; its full sequence is Large ribosomal subunit protein uL2 (281 aa).

Residues 223-281 form a disordered region; it reads VRGSVMNPVDHPHGGGEGKQPVGRKSPLTPWGKIALGVKTRKTKKSSNKLILRRRKDAK. The segment covering 261–281 has biased composition (basic residues); sequence KTRKTKKSSNKLILRRRKDAK.

It belongs to the universal ribosomal protein uL2 family. In terms of assembly, part of the 50S ribosomal subunit. Forms a bridge to the 30S subunit in the 70S ribosome.

Functionally, one of the primary rRNA binding proteins. Required for association of the 30S and 50S subunits to form the 70S ribosome, for tRNA binding and peptide bond formation. It has been suggested to have peptidyltransferase activity; this is somewhat controversial. Makes several contacts with the 16S rRNA in the 70S ribosome. The chain is Large ribosomal subunit protein uL2 from Mycoplasmopsis synoviae (strain 53) (Mycoplasma synoviae).